A 197-amino-acid polypeptide reads, in one-letter code: Ribonuclease HII (197 aa).

Positions 14-197 constitute an RNase H type-2 domain; it reads EKIVGIDEAG…RSFNLGVNDD (184 aa). The a divalent metal cation site is built by D20, E21, and D112.

Belongs to the RNase HII family. Mn(2+) serves as cofactor. Mg(2+) is required as a cofactor.

The protein localises to the cytoplasm. The enzyme catalyses Endonucleolytic cleavage to 5'-phosphomonoester.. In terms of biological role, endonuclease that specifically degrades the RNA of RNA-DNA hybrids. This is Ribonuclease HII from Sulfurihydrogenibium sp. (strain YO3AOP1).